A 376-amino-acid polypeptide reads, in one-letter code: Phospho-N-acetylmuramoyl-pentapeptide-transferase (376 aa).

10 helical membrane passes run arginine 28–isoleucine 48, threonine 76–leucine 96, phenylalanine 100–phenylalanine 120, tyrosine 135–alanine 155, tyrosine 179–threonine 199, glycine 211–valine 231, alanine 252–tyrosine 272, valine 279–phenylalanine 299, isoleucine 307–phenylalanine 327, and lysine 353–methionine 373.

Belongs to the glycosyltransferase 4 family. MraY subfamily. Mg(2+) is required as a cofactor.

The protein localises to the cell inner membrane. It carries out the reaction UDP-N-acetyl-alpha-D-muramoyl-L-alanyl-gamma-D-glutamyl-meso-2,6-diaminopimeloyl-D-alanyl-D-alanine + di-trans,octa-cis-undecaprenyl phosphate = di-trans,octa-cis-undecaprenyl diphospho-N-acetyl-alpha-D-muramoyl-L-alanyl-D-glutamyl-meso-2,6-diaminopimeloyl-D-alanyl-D-alanine + UMP. Its pathway is cell wall biogenesis; peptidoglycan biosynthesis. In terms of biological role, catalyzes the initial step of the lipid cycle reactions in the biosynthesis of the cell wall peptidoglycan: transfers peptidoglycan precursor phospho-MurNAc-pentapeptide from UDP-MurNAc-pentapeptide onto the lipid carrier undecaprenyl phosphate, yielding undecaprenyl-pyrophosphoryl-MurNAc-pentapeptide, known as lipid I. The sequence is that of Phospho-N-acetylmuramoyl-pentapeptide-transferase from Sorangium cellulosum (strain So ce56) (Polyangium cellulosum (strain So ce56)).